A 37-amino-acid chain; its full sequence is Large ribosomal subunit protein bL36 (37 aa).

Belongs to the bacterial ribosomal protein bL36 family.

The protein is Large ribosomal subunit protein bL36 of Bifidobacterium adolescentis (strain ATCC 15703 / DSM 20083 / NCTC 11814 / E194a).